Here is a 449-residue protein sequence, read N- to C-terminus: 23S rRNA (uracil(1939)-C(5))-methyltransferase RlmD (449 aa).

A TRAM domain is found at 1–66; sequence MGRSRHHNKL…AKFDEAKVVE (66 aa). [4Fe-4S] cluster is bound by residues cysteine 79, cysteine 85, cysteine 88, and cysteine 169. Positions 280, 309, 314, 330, 357, and 379 each coordinate S-adenosyl-L-methionine. Cysteine 405 functions as the Nucleophile in the catalytic mechanism.

The protein belongs to the class I-like SAM-binding methyltransferase superfamily. RNA M5U methyltransferase family. RlmD subfamily.

It carries out the reaction uridine(1939) in 23S rRNA + S-adenosyl-L-methionine = 5-methyluridine(1939) in 23S rRNA + S-adenosyl-L-homocysteine + H(+). Its function is as follows. Catalyzes the formation of 5-methyl-uridine at position 1939 (m5U1939) in 23S rRNA. This is 23S rRNA (uracil(1939)-C(5))-methyltransferase RlmD from Francisella tularensis subsp. novicida (strain U112).